A 498-amino-acid polypeptide reads, in one-letter code: Phosphonates import ATP-binding protein PhnC (498 aa).

The tract at residues Met-1–Ala-27 is disordered. Residues Leu-28–Arg-269 form the ABC transporter domain. Position 60 to 67 (Gly-60 to Ser-67) interacts with ATP. A lysR substrate binding domain region spans residues Gly-270–Pro-498.

It belongs to the ABC transporter superfamily. Phosphonates importer (TC 3.A.1.9.1) family. The complex is composed of two ATP-binding proteins (PhnC), two transmembrane proteins (PhnE) and a solute-binding protein (PhnD).

The protein resides in the cell inner membrane. The catalysed reaction is phosphonate(out) + ATP + H2O = phosphonate(in) + ADP + phosphate + H(+). Part of the ABC transporter complex PhnCDE involved in phosphonates import. Responsible for energy coupling to the transport system. The chain is Phosphonates import ATP-binding protein PhnC from Anaeromyxobacter dehalogenans (strain 2CP-C).